We begin with the raw amino-acid sequence, 134 residues long: Replication enhancer protein (134 aa).

The protein belongs to the geminiviridae replication enhancer protein family. As to quaternary structure, homooligomer. Interacts with the replication-associated protein (REP). Interacts with host proliferating cell nuclear antigen (PCNA). Interacts with host retinoblastoma-related protein 1 (RBR1), and may thereby deregulate the host cell cycle. Oligomerization and interaction with PCNA are necessary for optimal replication enhancement.

Functionally, increases viral DNA accumulation. Enhances infectivity and symptom expression. The protein is Replication enhancer protein of Tomato leaf curl virus (strain Australia) (ToLCV).